Reading from the N-terminus, the 302-residue chain is tRNA pseudouridine synthase B (302 aa).

Asp47 serves as the catalytic Nucleophile.

Belongs to the pseudouridine synthase TruB family. Type 1 subfamily.

The enzyme catalyses uridine(55) in tRNA = pseudouridine(55) in tRNA. Its function is as follows. Responsible for synthesis of pseudouridine from uracil-55 in the psi GC loop of transfer RNAs. This is tRNA pseudouridine synthase B from Methylobacillus flagellatus (strain ATCC 51484 / DSM 6875 / VKM B-1610 / KT).